The following is a 396-amino-acid chain: Tryptophan synthase beta chain (396 aa).

The residue at position 88 (Lys-88) is an N6-(pyridoxal phosphate)lysine.

The protein belongs to the TrpB family. Tetramer of two alpha and two beta chains. Requires pyridoxal 5'-phosphate as cofactor.

The enzyme catalyses (1S,2R)-1-C-(indol-3-yl)glycerol 3-phosphate + L-serine = D-glyceraldehyde 3-phosphate + L-tryptophan + H2O. It functions in the pathway amino-acid biosynthesis; L-tryptophan biosynthesis; L-tryptophan from chorismate: step 5/5. Functionally, the beta subunit is responsible for the synthesis of L-tryptophan from indole and L-serine. In Shewanella baltica (strain OS155 / ATCC BAA-1091), this protein is Tryptophan synthase beta chain.